Here is a 437-residue protein sequence, read N- to C-terminus: O-methyltransferase elcB (437 aa).

Residue aspartate 269 coordinates S-adenosyl-L-methionine. Histidine 319 serves as the catalytic Proton acceptor.

Belongs to the class I-like SAM-binding methyltransferase superfamily. Cation-independent O-methyltransferase family. COMT subfamily.

It functions in the pathway secondary metabolite biosynthesis. O-methyltransferase; part of the gene cluster that mediates the biosynthesis of elsinochrome C, a perelyenequinone phytotoxin structurally similar to cercosporin. The first step of elsinochrome C biosynthesis is performed by the polyketide synthase elcA which catalyzes the formation of nor-toralactone. The starter unit acyltransferase (SAT) domain of elcA initiates polyketide extension by the selective utilization of acetyl-CoA, which is elongated to the heptaketide in the beta-ketoacyl synthase (KS) domain by successive condensations with six malonyl units introduced by the malonyl acyltransferase (MAT) domain. The product template (PT) domain catalyzes C4-C9 and C2-C11 aldol cyclizations and dehydrations to a trihydroxynaphthalene, which is thought to be delivered to the thioesterase (TE) domain for product release. The bifunctional enzyme elcB then methylates nor-toralactone to toralactone before conducting an unusual oxidative aromatic ring opening. The next step in perylenequinone biosynthesis is an O-methylation at the nascent OH-6 of the elcB product performed by the O-methyltransferase elcD. The oxidative coupling of the two monomeric naphthol units in perylenequinone biosynthesis is catalyzed by the FAD-dependent monooxygenase elcE and the multicopper oxidase elcG. ElcG might catalyze the first intermolecular coupling in a regio- and stereo-selective manner via a phenol radical coupling mechanism and the elcE could forge the second C-C bond intramolecularly via a hydride transfer mechanism. The fasciclin domain-containing protein elcF might also play a role duting this step. The last piece of the puzzle in the biosynthesis of elsinochrome C is the additional annulation by enolate coupling to afford the dihydrobenzo(ghi)perylenequinone system, catalyzed by the FAD-dependent monooxygenase elcH. The polypeptide is O-methyltransferase elcB (Phaeosphaeria nodorum (strain SN15 / ATCC MYA-4574 / FGSC 10173) (Glume blotch fungus)).